Here is a 447-residue protein sequence, read N- to C-terminus: ATP-dependent protease ATPase subunit HslU (447 aa).

Residues Ile-17 and 59 to 64 contribute to the ATP site; that span reads GVGKTE. A disordered region spans residues 136 to 160; the sequence is PPARGGFQGEPTAEEKPTEKKESAT. Over residues 148–159 the composition is skewed to basic and acidic residues; the sequence is AEEKPTEKKESA. Residues Asp-260, Glu-325, and Arg-397 each contribute to the ATP site.

It belongs to the ClpX chaperone family. HslU subfamily. As to quaternary structure, a double ring-shaped homohexamer of HslV is capped on each side by a ring-shaped HslU homohexamer. The assembly of the HslU/HslV complex is dependent on binding of ATP.

It localises to the cytoplasm. Functionally, ATPase subunit of a proteasome-like degradation complex; this subunit has chaperone activity. The binding of ATP and its subsequent hydrolysis by HslU are essential for unfolding of protein substrates subsequently hydrolyzed by HslV. HslU recognizes the N-terminal part of its protein substrates and unfolds these before they are guided to HslV for hydrolysis. The sequence is that of ATP-dependent protease ATPase subunit HslU from Coxiella burnetii (strain RSA 331 / Henzerling II).